We begin with the raw amino-acid sequence, 1020 residues long: Vacuolar membrane protease (1020 aa).

The Cytoplasmic segment spans residues 1–11 (MKCHNPFGFRV). The chain crosses the membrane as a helical span at residues 12 to 32 (GPVTFWTIIIYLALLVPLLWI). The Vacuolar segment spans residues 33 to 410 (HETVPPAPSS…GFAVFGLRGL (378 aa)). N-linked (GlcNAc...) asparagine glycosylation is found at N50, N94, and N130. The Zn(2+) site is built by H191 and D203. Catalysis depends on E237, which acts as the Proton acceptor. Residues E238, E263, and H336 each coordinate Zn(2+). The helical transmembrane segment at 411 to 431 (FAWSLTLLIVSPLILAILVFI) threads the bilayer. The Cytoplasmic segment spans residues 432–467 (LNRHDKLYFFSRKINVHNEGSEDPVSIGGFRGFTRF). The helical transmembrane segment at 468–488 (PIAVGFSGALTLASAFLLTKI) threads the bilayer. Over 489 to 491 (NPM) the chain is Vacuolar. The helical transmembrane segment at 492–512 (IVYSSEYAVWGMMLSLFYVSL) threads the bilayer. Over 513 to 529 (WMTLKGSSAVRPSALQR) the chain is Cytoplasmic. The chain crosses the membrane as a helical span at residues 530 to 550 (GYIHIWLFIVSWGLLIVVAVT). The Vacuolar portion of the chain corresponds to 551–561 (EDRLKIASGYP). A helical membrane pass occupies residues 562–582 (VVFLHSALFLSTVISFLELFG). The Cytoplasmic portion of the chain corresponds to 583 to 690 (LTKKHDYARR…RLPGWTWILQ (108 aa)). Positions 609–648 (DDALIAPDTPNDEAEDSDGEDSEHEPTETTPLRAGGDSRV) are disordered. Acidic residues predominate over residues 618-631 (PNDEAEDSDGEDSE). Residues 691–711 (FLLLAPINVILWGQIGLFAVA) form a helical membrane-spanning segment. Over 712–724 (ATQAGGADGGSVL) the chain is Vacuolar. The helical transmembrane segment at 725–745 (TTYLIIAVLSIVILVPLAPFI) threads the bilayer. At 746–750 (HRVHY) the chain is on the cytoplasmic side. Residues 751–771 (YVPIILFAAFAGTLIYNLIAF) traverse the membrane as a helical segment. At 772–1020 (PFSANNRYKI…VGLVRPVKRF (249 aa)) the chain is on the vacuolar side. N851, N868, and N873 each carry an N-linked (GlcNAc...) asparagine glycan.

Belongs to the peptidase M28 family. Zn(2+) is required as a cofactor.

Its subcellular location is the vacuole membrane. May be involved in vacuolar sorting and osmoregulation. This Verticillium alfalfae (strain VaMs.102 / ATCC MYA-4576 / FGSC 10136) (Verticillium wilt of alfalfa) protein is Vacuolar membrane protease.